The sequence spans 385 residues: GTPase Obg (385 aa).

Positions 1-159 (MHFIDQAEIE…RRLRLELKLI (159 aa)) constitute an Obg domain. The OBG-type G domain occupies 160–328 (AEVGIVGMPN…LLQRVWQCLG (169 aa)). Residues 166-173 (GMPNAGKS), 191-195 (FTTLQ), 213-216 (DIPG), 280-283 (NKID), and 309-311 (SAV) each bind GTP. Mg(2+) contacts are provided by serine 173 and threonine 193.

It belongs to the TRAFAC class OBG-HflX-like GTPase superfamily. OBG GTPase family. In terms of assembly, monomer. Mg(2+) serves as cofactor.

Its subcellular location is the cytoplasm. In terms of biological role, an essential GTPase which binds GTP, GDP and possibly (p)ppGpp with moderate affinity, with high nucleotide exchange rates and a fairly low GTP hydrolysis rate. Plays a role in control of the cell cycle, stress response, ribosome biogenesis and in those bacteria that undergo differentiation, in morphogenesis control. In Synechococcus sp. (strain JA-3-3Ab) (Cyanobacteria bacterium Yellowstone A-Prime), this protein is GTPase Obg.